The primary structure comprises 490 residues: Dual specificity protein kinase CLK3 (490 aa).

Y7 carries the post-translational modification Phosphotyrosine. Residues S9, S49, S51, S67, S76, and S78 each carry the phosphoserine modification. Positions 22–138 are disordered; it reads RRRSYSREHE…SKRSSRSVED (117 aa). 2 stretches are compositionally biased toward basic and acidic residues: residues 26–56 and 63–76; these read YSRE…DRLP and EHRD…EDRS. Residues 103-116 are compositionally biased toward basic residues; that stretch reads TRKHAHHCHKRRTR. Low complexity predominate over residues 117–130; the sequence is SCSSASSRSQQSSK. Residue S135 is modified to Phosphoserine. One can recognise a Protein kinase domain in the interval 156–472; sequence YEIVGNLGEG…LAEALLHPFF (317 aa). ATP-binding positions include 162–170 and K186; that span reads LGEGTFGKV. D283 functions as the Proton acceptor in the catalytic mechanism.

The protein belongs to the protein kinase superfamily. CMGC Ser/Thr protein kinase family. Lammer subfamily. In terms of processing, autophosphorylates on all three types of residues.

The protein resides in the nucleus. Its subcellular location is the cytoplasm. It is found in the cytoplasmic vesicle. It localises to the secretory vesicle. The protein localises to the acrosome. The catalysed reaction is L-seryl-[protein] + ATP = O-phospho-L-seryl-[protein] + ADP + H(+). It catalyses the reaction L-threonyl-[protein] + ATP = O-phospho-L-threonyl-[protein] + ADP + H(+). It carries out the reaction L-tyrosyl-[protein] + ATP = O-phospho-L-tyrosyl-[protein] + ADP + H(+). Its activity is regulated as follows. Leucettine L41 inhibits its kinase activity and affects the regulation of alternative splicing mediated by phosphorylation of SR proteins. Its function is as follows. Dual specificity kinase acting on both serine/threonine and tyrosine-containing substrates. Phosphorylates serine- and arginine-rich (SR) proteins of the spliceosomal complex. May be a constituent of a network of regulatory mechanisms that enable SR proteins to control RNA splicing and can cause redistribution of SR proteins from speckles to a diffuse nucleoplasmic distribution. Phosphorylates SRSF1 and SRSF3. Regulates the alternative splicing of tissue factor (F3) pre-mRNA in endothelial cells. The protein is Dual specificity protein kinase CLK3 (CLK3) of Bos taurus (Bovine).